The chain runs to 211 residues: Holliday junction resolvase RecU (211 aa).

Residues Thr87, Asp89, Asp102, and Gln121 each coordinate Mg(2+).

It belongs to the RecU family. Mg(2+) is required as a cofactor.

The protein resides in the cytoplasm. It catalyses the reaction Endonucleolytic cleavage at a junction such as a reciprocal single-stranded crossover between two homologous DNA duplexes (Holliday junction).. Its function is as follows. Endonuclease that resolves Holliday junction intermediates in genetic recombination. Cleaves mobile four-strand junctions by introducing symmetrical nicks in paired strands. Promotes annealing of linear ssDNA with homologous dsDNA. Required for DNA repair, homologous recombination and chromosome segregation. This is Holliday junction resolvase RecU from Limosilactobacillus fermentum (strain NBRC 3956 / LMG 18251) (Lactobacillus fermentum).